Reading from the N-terminus, the 675-residue chain is Acetyl-coenzyme A synthetase 2 (675 aa).

CoA-binding positions include 206-209 (RGGK) and T325. Residues 401 to 403 (GEP), 425 to 430 (DTMWQT), D516, and R531 each bind ATP. A CoA-binding site is contributed by S539. R542 contacts ATP. R604 provides a ligand contact to CoA.

It belongs to the ATP-dependent AMP-binding enzyme family.

The catalysed reaction is acetate + ATP + CoA = acetyl-CoA + AMP + diphosphate. In Zygosaccharomyces bailii, this protein is Acetyl-coenzyme A synthetase 2 (ACS2).